The chain runs to 338 residues: GNSVLSGFNVEFLAHSLNTKEDTAKRLRSPQDERGQIVKVEDGLHIISPELQEEEEQSHSQRKEEEEEEQEQRHRKHSKKEDEDEDEEEEEEREQRHRKHSEKEEEDEDEPRSYETRRKWKKHTAEKKRESHGQGEEEEELEKEEEEEEEIQRQHSKGRKNGLEETICSAKIRENIARPSRGDLYNSGAGRISTVNSLTLPILRNLRLSAEYVLLYRNGIYAPHWNINANSLLYVIRGEGRVRIVNSEGNKVFDDKVSLGQLVVVPQNFVVAQQAGNEEGFEYVVFKTNDRAAVSHVNQVFRATPGEVLANAFGLRHSQVAQIKSNGNRGPLVQPQSQ.

The disordered stretch occupies residues 16–162; that stretch reads SLNTKEDTAK…RQHSKGRKNG (147 aa). Residues 18–44 show a composition bias toward basic and acidic residues; sequence NTKEDTAKRLRSPQDERGQIVKVEDGL. Acidic residues-rich tracts occupy residues 82 to 92 and 136 to 150; these read DEDEDEEEEEE and EEEE…EEEE. Residues 174 to 321 enclose the Cupin type-1 domain; it reads ENIARPSRGD…AFGLRHSQVA (148 aa).

The protein belongs to the 11S seed storage protein (globulins) family. In terms of assembly, hexamer; each subunit is composed of an acidic and a basic chain derived from a single precursor and linked by a disulfide bond.

This protein found in the seeds of many leguminous and non-leguminous plants is the source of sulfur-containing amino acids in seed meals. In Pisum sativum (Garden pea), this protein is Legumin B (LEGB).